Reading from the N-terminus, the 317-residue chain is Putative HTH-type transcriptional regulatory protein Mlab_0160 (317 aa).

The region spanning 132–189 is the HTH cro/C1-type domain; the sequence is LRTLREEQAMSLGDLAHALGVSRRTISKYEGGMGTTLEMAMRLEEFFNDDIVMPIDLL. The H-T-H motif DNA-binding region spans 143–162; sequence LGDLAHALGVSRRTISKYEG. The tract at residues 199–219 is disordered; the sequence is VPASLASGHNPESDAQPKRPE. Residues 209–219 are compositionally biased toward basic and acidic residues; it reads PESDAQPKRPE.

The polypeptide is Putative HTH-type transcriptional regulatory protein Mlab_0160 (Methanocorpusculum labreanum (strain ATCC 43576 / DSM 4855 / Z)).